The following is a 313-amino-acid chain: 4-diphosphocytidyl-2-C-methyl-D-erythritol kinase (313 aa).

Lys10 is a catalytic residue. ATP is bound at residue 95 to 105 (PVTAGLGGGSS). Residue Asp136 is part of the active site. The tract at residues 289–313 (HPRVSPWRSPRSASSPSTRRSSRPT) is disordered. The span at 292-307 (VSPWRSPRSASSPSTR) shows a compositional bias: low complexity.

Belongs to the GHMP kinase family. IspE subfamily.

The enzyme catalyses 4-CDP-2-C-methyl-D-erythritol + ATP = 4-CDP-2-C-methyl-D-erythritol 2-phosphate + ADP + H(+). It functions in the pathway isoprenoid biosynthesis; isopentenyl diphosphate biosynthesis via DXP pathway; isopentenyl diphosphate from 1-deoxy-D-xylulose 5-phosphate: step 3/6. Its function is as follows. Catalyzes the phosphorylation of the position 2 hydroxy group of 4-diphosphocytidyl-2C-methyl-D-erythritol. This is 4-diphosphocytidyl-2-C-methyl-D-erythritol kinase from Anaeromyxobacter dehalogenans (strain 2CP-C).